We begin with the raw amino-acid sequence, 657 residues long: Glycogen debranching enzyme (657 aa).

Aspartate 336 acts as the Nucleophile in catalysis. The active-site Proton donor is the glutamate 371. Positions 460–479 (ANGEENRDGTNNNYSNNHGK) are disordered.

This sequence belongs to the glycosyl hydrolase 13 family.

The catalysed reaction is Hydrolysis of (1-&gt;6)-alpha-D-glucosidic linkages to branches with degrees of polymerization of three or four glucose residues in limit dextrin.. It functions in the pathway glycan degradation; glycogen degradation. In terms of biological role, removes maltotriose and maltotetraose chains that are attached by 1,6-alpha-linkage to the limit dextrin main chain, generating a debranched limit dextrin. This chain is Glycogen debranching enzyme, found in Escherichia coli O1:K1 / APEC.